Consider the following 748-residue polypeptide: Acyl-coenzyme A oxidase (748 aa).

Belongs to the acyl-CoA oxidase family. As to quaternary structure, homooctamer. The cofactor is FAD.

Its subcellular location is the peroxisome. The enzyme catalyses a 2,3-saturated acyl-CoA + O2 = a (2E)-enoyl-CoA + H2O2. Its pathway is lipid metabolism; peroxisomal fatty acid beta-oxidation. This is Acyl-coenzyme A oxidase (POX1) from Saccharomyces cerevisiae (strain ATCC 204508 / S288c) (Baker's yeast).